A 361-amino-acid polypeptide reads, in one-letter code: Chorismate synthase (361 aa).

Residues arginine 48 and arginine 54 each contribute to the NADP(+) site. Residues 125 to 127, 238 to 239, glycine 278, 293 to 297, and arginine 319 each bind FMN; these read RSS, NA, and KPTSS.

Belongs to the chorismate synthase family. As to quaternary structure, homotetramer. The cofactor is FMNH2.

It carries out the reaction 5-O-(1-carboxyvinyl)-3-phosphoshikimate = chorismate + phosphate. Its pathway is metabolic intermediate biosynthesis; chorismate biosynthesis; chorismate from D-erythrose 4-phosphate and phosphoenolpyruvate: step 7/7. Catalyzes the anti-1,4-elimination of the C-3 phosphate and the C-6 proR hydrogen from 5-enolpyruvylshikimate-3-phosphate (EPSP) to yield chorismate, which is the branch point compound that serves as the starting substrate for the three terminal pathways of aromatic amino acid biosynthesis. This reaction introduces a second double bond into the aromatic ring system. In Salmonella choleraesuis (strain SC-B67), this protein is Chorismate synthase.